Reading from the N-terminus, the 188-residue chain is Elongation factor P (188 aa).

The tract at residues 139 to 163 (PVTKGQTASSSYKPATLSNGVRTQV) is disordered. The segment covering 142–160 (KGQTASSSYKPATLSNGVR) has biased composition (polar residues).

The protein belongs to the elongation factor P family.

It is found in the cytoplasm. Its pathway is protein biosynthesis; polypeptide chain elongation. In terms of biological role, involved in peptide bond synthesis. Stimulates efficient translation and peptide-bond synthesis on native or reconstituted 70S ribosomes in vitro. Probably functions indirectly by altering the affinity of the ribosome for aminoacyl-tRNA, thus increasing their reactivity as acceptors for peptidyl transferase. The sequence is that of Elongation factor P from Methylobacterium nodulans (strain LMG 21967 / CNCM I-2342 / ORS 2060).